A 1442-amino-acid polypeptide reads, in one-letter code: CD109 antigen (1442 aa).

Positions 1-21 (MRSRRLLSAAHLLCLCAVALA) are cleaved as a signal peptide. N-linked (GlcNAc...) asparagine glycans are attached at residues Asn67, Asn117, Asn246, Asn278, Asn370, and Asn421. The tract at residues 595–704 (DKSVTLMENS…TWIWLDAYMG (110 aa)) is bait region (approximate). The isoglutamyl cysteine thioester (Cys-Gln) cross-link spans 923–926 (CGEQ). Asn1088 carries N-linked (GlcNAc...) asparagine glycosylation. A lipid anchor (GPI-anchor amidated alanine) is attached at Ala1419. Residues 1420 to 1442 (TDSLRRSSSLLVFCSVLLYFVQH) constitute a propeptide, removed in mature form.

Belongs to the protease inhibitor I39 (alpha-2-macroglobulin) family. As to quaternary structure, heterodimer; disulfide-linked. Interacts with TGFB1 and TGFBR1. Forms a heteromeric complex with TGFBR1, TGFBR2 and TGFBR3 in a ligand-independent manner. Post-translationally, N-glycosylated. 2 forms of 150 (p150) and 120 kDa (p120) exist due to proteolytic degradation from a 180 kDa form.

Its subcellular location is the cell membrane. Modulates negatively TGFB1 signaling in keratinocytes. This chain is CD109 antigen (Cd109), found in Mus musculus (Mouse).